The primary structure comprises 85 residues: Dual endothelin-1/VEGF signal peptide receptor (85 aa).

Over 1 to 18 (MTMFKGSNEMKSRWNWGS) the chain is Extracellular. The chain crosses the membrane as a helical span at residues 19 to 37 (ITCIICFTCVGSQLSMSSS). Residues 38–85 (KASNFSGPLQLYQRELEIFIVLTDVPNYRLIKENSHLHTTIVDQGRTV) are Cytoplasmic-facing.

Post-translationally, N-glycosylated. As to expression, expressed in kidney. Expressed in endothelial cells.

Its subcellular location is the cell membrane. Its function is as follows. Dual receptor for both endothelin-1 and the signal sequence of vascular endothelial growth factor A. Does not act as a receptor for angiotensin-2. Does not bind the VEGFA mature protein. May play a role in angiogenesis with a significant role in cardiovascular and neural development. In Homo sapiens (Human), this protein is Dual endothelin-1/VEGF signal peptide receptor.